Consider the following 341-residue polypeptide: Anthranilate phosphoribosyltransferase (341 aa).

5-phospho-alpha-D-ribose 1-diphosphate-binding positions include Gly80, Gly83 to Asp84, Thr88, Asn90 to Thr93, Lys108 to Ser116, and Ser120. Position 80 (Gly80) interacts with anthranilate. Mg(2+) is bound at residue Ser92. Asn111 provides a ligand contact to anthranilate. An anthranilate-binding site is contributed by Arg166. Residues Asp225 and Glu226 each contribute to the Mg(2+) site.

The protein belongs to the anthranilate phosphoribosyltransferase family. As to quaternary structure, homodimer. Mg(2+) is required as a cofactor.

The enzyme catalyses N-(5-phospho-beta-D-ribosyl)anthranilate + diphosphate = 5-phospho-alpha-D-ribose 1-diphosphate + anthranilate. It participates in amino-acid biosynthesis; L-tryptophan biosynthesis; L-tryptophan from chorismate: step 2/5. Its function is as follows. Catalyzes the transfer of the phosphoribosyl group of 5-phosphorylribose-1-pyrophosphate (PRPP) to anthranilate to yield N-(5'-phosphoribosyl)-anthranilate (PRA). This chain is Anthranilate phosphoribosyltransferase, found in Roseiflexus sp. (strain RS-1).